The primary structure comprises 548 residues: ATP synthase subunit alpha (548 aa).

ATP is bound at residue 172 to 179 (GDRKTGKT). The interval 526 to 548 (AEAMDEADVEKESVKVRKPAPKK) is disordered.

It belongs to the ATPase alpha/beta chains family. In terms of assembly, F-type ATPases have 2 components, CF(1) - the catalytic core - and CF(0) - the membrane proton channel. CF(1) has five subunits: alpha(3), beta(3), gamma(1), delta(1), epsilon(1). CF(0) has three main subunits: a(1), b(2) and c(9-12). The alpha and beta chains form an alternating ring which encloses part of the gamma chain. CF(1) is attached to CF(0) by a central stalk formed by the gamma and epsilon chains, while a peripheral stalk is formed by the delta and b chains.

The protein resides in the cell membrane. The enzyme catalyses ATP + H2O + 4 H(+)(in) = ADP + phosphate + 5 H(+)(out). Produces ATP from ADP in the presence of a proton gradient across the membrane. The alpha chain is a regulatory subunit. This Mycolicibacterium vanbaalenii (strain DSM 7251 / JCM 13017 / BCRC 16820 / KCTC 9966 / NRRL B-24157 / PYR-1) (Mycobacterium vanbaalenii) protein is ATP synthase subunit alpha.